Consider the following 240-residue polypeptide: Aquaporin Z (240 aa).

2 helical membrane passes run 10–30 and 35–55; these read MIGT…AAGF and IGLV…AYAI. The NPA 1 signature appears at 64-66; sequence NPA. A run of 3 helical transmembrane segments spans residues 90 to 110, 131 to 151, and 160 to 180; these read VLGA…AAGF, LVAC…VIMG, and GFAP…SIPV. The NPA 2 signature appears at 186–188; the sequence is NPA. A helical transmembrane segment spans residues 202 to 222; the sequence is IGQLWLFWVAPLLGGVLGGVI.

This sequence belongs to the MIP/aquaporin (TC 1.A.8) family. As to quaternary structure, homotetramer.

The protein resides in the cell inner membrane. The catalysed reaction is H2O(in) = H2O(out). Its function is as follows. Channel that permits osmotically driven movement of water in both directions. It is involved in the osmoregulation and in the maintenance of cell turgor during volume expansion in rapidly growing cells. It mediates rapid entry or exit of water in response to abrupt changes in osmolarity. This chain is Aquaporin Z, found in Rhodopseudomonas palustris (strain ATCC BAA-98 / CGA009).